Consider the following 432-residue polypeptide: Glutamate-1-semialdehyde 2,1-aminomutase (432 aa).

Lys271 carries the N6-(pyridoxal phosphate)lysine modification.

Belongs to the class-III pyridoxal-phosphate-dependent aminotransferase family. HemL subfamily. Homodimer. Pyridoxal 5'-phosphate is required as a cofactor.

The protein localises to the cytoplasm. It carries out the reaction (S)-4-amino-5-oxopentanoate = 5-aminolevulinate. Its pathway is porphyrin-containing compound metabolism; protoporphyrin-IX biosynthesis; 5-aminolevulinate from L-glutamyl-tRNA(Glu): step 2/2. It functions in the pathway porphyrin-containing compound metabolism; chlorophyll biosynthesis. The protein is Glutamate-1-semialdehyde 2,1-aminomutase of Prochlorococcus marinus (strain NATL2A).